A 113-amino-acid chain; its full sequence is Parvalbumin beta (113 aa).

An N-acetylalanine modification is found at Ala-1. Cys-18 carries an S-linked (Glc) cysteine glycan. EF-hand domains follow at residues 38–73 (FSAD…FAAD) and 77–112 (LTDA…WGAK). Positions 51, 53, 55, 57, 59, 62, 90, 92, 94, 96, and 101 each coordinate Ca(2+).

It belongs to the parvalbumin family. As to expression, muscle (at protein level).

In muscle, parvalbumin is thought to be involved in relaxation after contraction. It binds two calcium ions. The polypeptide is Parvalbumin beta (Gadus morhua subsp. callarias (Baltic cod)).